A 428-amino-acid polypeptide reads, in one-letter code: Trigger factor (428 aa).

The 76-residue stretch at 165–240 (ADLIKLDAEG…VKEVKRMELP (76 aa)) folds into the PPIase FKBP-type domain.

This sequence belongs to the FKBP-type PPIase family. Tig subfamily.

It is found in the cytoplasm. The enzyme catalyses [protein]-peptidylproline (omega=180) = [protein]-peptidylproline (omega=0). In terms of biological role, involved in protein export. Acts as a chaperone by maintaining the newly synthesized protein in an open conformation. Functions as a peptidyl-prolyl cis-trans isomerase. The protein is Trigger factor of Prosthecochloris aestuarii (strain DSM 271 / SK 413).